The chain runs to 160 residues: Transcription elongation factor GreA (160 aa).

A coiled-coil region spans residues 43–75; that stretch reads LSENAEYEAAREQQAQMESKIVDLENKLTRASI.

This sequence belongs to the GreA/GreB family.

Necessary for efficient RNA polymerase transcription elongation past template-encoded arresting sites. The arresting sites in DNA have the property of trapping a certain fraction of elongating RNA polymerases that pass through, resulting in locked ternary complexes. Cleavage of the nascent transcript by cleavage factors such as GreA or GreB allows the resumption of elongation from the new 3'terminus. GreA releases sequences of 2 to 3 nucleotides. This chain is Transcription elongation factor GreA, found in Prosthecochloris aestuarii (strain DSM 271 / SK 413).